We begin with the raw amino-acid sequence, 503 residues long: Anhydrotetracycline monooxygenase (503 aa).

The protein belongs to the PheA/TfdB FAD monooxygenase family. The cofactor is FAD.

The catalysed reaction is anhydrotetracycline + NADPH + O2 + H(+) = 5a,11a-dehydrotetracycline + NADP(+) + H2O. It functions in the pathway antibiotic biosynthesis; oxytetracycline biosynthesis. Functionally, catalyzes hydroxylation of the anthracycline structure at position C-6 during the biosynthesis of oxytetracyline. In Streptomyces rimosus, this protein is Anhydrotetracycline monooxygenase.